The following is a 185-amino-acid chain: MINEILQKSEKKMSASLDVLLQELSGIRTGRSSPALVEHIRVEYAGVPTPINHLANISAPDPRYITIQPWDRSCLSAIEKAIMKSDLGLMPNNDGNIIRLNIPPLSEERRQEMIKIVNKRLEEDKIAMRNVRRDAMDEMKKLEKAKEISQDDLKRGSDQLQKITDNFIAKADKLGADKEAELRQV.

It belongs to the RRF family.

It is found in the cytoplasm. Its function is as follows. Responsible for the release of ribosomes from messenger RNA at the termination of protein biosynthesis. May increase the efficiency of translation by recycling ribosomes from one round of translation to another. In Dehalococcoides mccartyi (strain CBDB1), this protein is Ribosome-recycling factor.